Reading from the N-terminus, the 260-residue chain is Snake venom serine protease KN6 (260 aa).

Residues 1–18 form the signal peptide; that stretch reads MVLIRVLANLLILQLSYA. The propeptide occupies 19–24; that stretch reads QKSSEL. The Peptidase S1 domain maps to 25–251; the sequence is VIGGDECNIN…HLDWIQSIIA (227 aa). Disulfide bonds link C31-C165, C100-C258, C144-C212, C176-C191, and C202-C227. The active-site Charge relay system is the H67. N105 carries an N-linked (GlcNAc...) asparagine glycan. D112 functions as the Charge relay system in the catalytic mechanism. N172 carries an N-linked (GlcNAc...) asparagine glycan. Catalysis depends on S206, which acts as the Charge relay system. Residues N213 and N255 are each glycosylated (N-linked (GlcNAc...) asparagine).

It belongs to the peptidase S1 family. Snake venom subfamily. As to quaternary structure, monomer. As to expression, expressed by the venom gland.

The protein localises to the secreted. In terms of biological role, snake venom serine protease that may act in the hemostasis system of the prey. The protein is Snake venom serine protease KN6 of Trimeresurus stejnegeri (Chinese green tree viper).